Reading from the N-terminus, the 159-residue chain is Transcription elongation factor GreA (159 aa).

Belongs to the GreA/GreB family.

Its function is as follows. Necessary for efficient RNA polymerase transcription elongation past template-encoded arresting sites. The arresting sites in DNA have the property of trapping a certain fraction of elongating RNA polymerases that pass through, resulting in locked ternary complexes. Cleavage of the nascent transcript by cleavage factors such as GreA or GreB allows the resumption of elongation from the new 3'terminus. GreA releases sequences of 2 to 3 nucleotides. This Buchnera aphidicola subsp. Acyrthosiphon pisum (strain APS) (Acyrthosiphon pisum symbiotic bacterium) protein is Transcription elongation factor GreA.